The chain runs to 872 residues: Valine--tRNA ligase (872 aa).

Positions 46-56 match the 'HIGH' region motif; it reads PNVTGKLHIGH. The 'KMSKS' region signature appears at 523 to 527; it reads KMSKS. Lys526 provides a ligand contact to ATP. A coiled-coil region spans residues 796–872; sequence IEIANDSFIN…KDKLKELTND (77 aa).

The protein belongs to the class-I aminoacyl-tRNA synthetase family. ValS type 1 subfamily. In terms of assembly, monomer.

The protein localises to the cytoplasm. The enzyme catalyses tRNA(Val) + L-valine + ATP = L-valyl-tRNA(Val) + AMP + diphosphate. In terms of biological role, catalyzes the attachment of valine to tRNA(Val). As ValRS can inadvertently accommodate and process structurally similar amino acids such as threonine, to avoid such errors, it has a 'posttransfer' editing activity that hydrolyzes mischarged Thr-tRNA(Val) in a tRNA-dependent manner. This Mycoplasma mycoides subsp. mycoides SC (strain CCUG 32753 / NCTC 10114 / PG1) protein is Valine--tRNA ligase.